We begin with the raw amino-acid sequence, 262 residues long: Glycine and serine-rich protein 1 (262 aa).

Positions 1 to 21 are cleaved as a signal peptide; it reads MVIKTSLTVLILGVLIAEVFC. An N-linked (GlcNAc...) asparagine glycan is attached at Asn59. A disordered region spans residues 172-212; sequence SNGGWGAETGSSGGMNSQSSGSQSGSWGSSSGSWGGSSGSM. The span at 174–184 shows a compositional bias: gly residues; that stretch reads GGWGAETGSSG. The segment covering 185-203 has biased composition (low complexity); it reads GMNSQSSGSQSGSWGSSSG.

As to expression, component of the acid-insoluble and acid-soluble organic matrix of calcified layers of the shell (at protein level).

The protein localises to the secreted. The chain is Glycine and serine-rich protein 1 from Lottia gigantea (Giant owl limpet).